The sequence spans 229 residues: MLKYLNQSEAINVDLELFNEYKFSVDQLMELAGLSCAHAIAKCFPADRFGRVLVCCGPGNNGGDGLVCARHLALMGYLPVLYYPKPTPKPLYENLAHQCKRMEIESISECPSVALAAECYDLIVDALFGFSFKPPVRADFVPVVELLQQTKLPIASVDIPSGWDVEAGKLNECDMEPTLLISLTAPKLCAKHFKGKHHFLGGRFVPPALQRKYELNLPTYPGNEMCLEL.

In terms of domain architecture, YjeF N-terminal spans 10-217 (AINVDLELFN…ALQRKYELNL (208 aa)). 60 to 64 (NNGGD) is a binding site for (6S)-NADPHX. Residues asparagine 61 and aspartate 125 each contribute to the K(+) site. (6S)-NADPHX-binding positions include 129 to 135 (GFSFKPP) and aspartate 158. Serine 161 provides a ligand contact to K(+).

Belongs to the NnrE/AIBP family. Requires K(+) as cofactor.

The enzyme catalyses (6R)-NADHX = (6S)-NADHX. It carries out the reaction (6R)-NADPHX = (6S)-NADPHX. Catalyzes the epimerization of the S- and R-forms of NAD(P)HX, a damaged form of NAD(P)H that is a result of enzymatic or heat-dependent hydration. This is a prerequisite for the S-specific NAD(P)H-hydrate dehydratase to allow the repair of both epimers of NAD(P)HX. The chain is NAD(P)H-hydrate epimerase from Drosophila mojavensis (Fruit fly).